The sequence spans 513 residues: uncharacterized protein (513 aa).

A disordered region spans residues 1–48 (MGSSEEQSVPGDDFYEESGDLNTGLSLVLRPAKSNEGESSLSSPKGSK). A compositionally biased stretch (polar residues) spans 37–48 (GESSLSSPKGSK). Residues Ser-43, Ser-84, and Ser-123 each carry the phosphoserine modification. Disordered stretches follow at residues 210 to 229 (DGNH…GDLA), 236 to 287 (TRDS…GSKS), 390 to 414 (AKED…AEPP), and 453 to 481 (SVLS…TQGC).

This is an uncharacterized protein from Mus musculus (Mouse).